We begin with the raw amino-acid sequence, 360 residues long: DNA polymerase IV (360 aa).

The 183-residue stretch at 9-191 folds into the UmuC domain; the sequence is IMHLDIDAFY…LNINKIPYIG (183 aa). Residues D13 and D108 each contribute to the Mg(2+) site. The active site involves E109.

Belongs to the DNA polymerase type-Y family. In terms of assembly, monomer. Mg(2+) is required as a cofactor.

Its subcellular location is the cytoplasm. The enzyme catalyses DNA(n) + a 2'-deoxyribonucleoside 5'-triphosphate = DNA(n+1) + diphosphate. In terms of biological role, poorly processive, error-prone DNA polymerase involved in untargeted mutagenesis. Copies undamaged DNA at stalled replication forks, which arise in vivo from mismatched or misaligned primer ends. These misaligned primers can be extended by PolIV. Exhibits no 3'-5' exonuclease (proofreading) activity. May be involved in translesional synthesis, in conjunction with the beta clamp from PolIII. This chain is DNA polymerase IV, found in Ureaplasma parvum serovar 3 (strain ATCC 27815 / 27 / NCTC 11736).